The primary structure comprises 792 residues: Alpha-1,6-mannosylglycoprotein 6-beta-N-acetylglucosaminyltransferase B (792 aa).

The Cytoplasmic portion of the chain corresponds to 1-24 (MITVNPDGKIMVRRCLVTLRPFRL). A helical; Signal-anchor for type II membrane protein membrane pass occupies residues 25 to 45 (FVLGIGFFTLCFLMTSLGGQF). Residues 46–792 (SARRLGDSPF…GQVALCQGCL (747 aa)) lie on the Lumenal side of the membrane. N-linked (GlcNAc...) asparagine glycosylation is present at Asn-127. Intrachain disulfides connect Cys-157–Cys-195, Cys-168–Cys-208, Cys-184–Cys-353, Cys-387–Cys-644, Cys-700–Cys-775, Cys-704–Cys-777, Cys-711–Cys-764, Cys-732–Cys-753, and Cys-788–Cys-791.

Belongs to the glycosyltransferase 18 family. It depends on Mn(2+) as a cofactor. Predominantly expressed in brain. Expressed in all areas of the adult and fetal brain. Also expressed at much lower levels in testis, spleen and thymus.

It is found in the golgi apparatus membrane. It catalyses the reaction N(4)-{beta-D-GlcNAc-(1-&gt;2)-[beta-D-GlcNAc-(1-&gt;4)]-alpha-D-Man-(1-&gt;3)-[beta-D-GlcNAc-(1-&gt;2)-alpha-D-Man-(1-&gt;6)]-beta-D-Man-(1-&gt;4)-beta-D-GlcNAc-(1-&gt;4)-beta-D-GlcNAc}-L-asparaginyl-[protein] + UDP-N-acetyl-alpha-D-glucosamine = N(4)-{beta-D-GlcNAc-(1-&gt;2)-[beta-D-GlcNAc-(1-&gt;4)]-alpha-D-Man-(1-&gt;3)-[beta-D-GlcNAc-(1-&gt;2)-[beta-D-GlcNAc-(1-&gt;6)]-alpha-D-Man-(1-&gt;6)]-beta-D-Man-(1-&gt;4)-beta-D-GlcNAc-(1-&gt;4)-beta-D-GlcNAc}-L-asparaginyl-[protein] + UDP + H(+). It carries out the reaction 3-O-[N-acetyl-beta-D-glucosaminyl-(1-&gt;2)-alpha-D-mannosyl]-L-seryl-[protein] + UDP-N-acetyl-alpha-D-glucosamine = O(3)-{N-acetyl-beta-D-glucosaminyl-(1-&gt;2)-[N-acetyl-beta-D-glucosaminyl-(1-&gt;6)]-alpha-D-mannosyl}-L-seryl-[protein] + UDP + H(+). The catalysed reaction is 3-O-[N-acetyl-beta-D-glucosaminyl-(1-&gt;2)-alpha-D-mannosyl]-L-threonyl-[protein] + UDP-N-acetyl-alpha-D-glucosamine = O(3)-{N-acetyl-beta-D-glucosaminyl-(1-&gt;2)-[N-acetyl-beta-D-glucosaminyl-(1-&gt;6)]-alpha-D-mannosyl}-L-threonyl-[protein] + UDP + H(+). The protein operates within protein modification; protein glycosylation. Functionally, glycosyltransferase that acts on alpha-linked mannose of N-glycans and O-mannosyl glycans. Catalyzes the transfer of N-acetylglucosamine (GlcNAc) to the beta 1-6 linkage of the mannose residue of GlcNAc-beta1,2-Man-alpha on both the alpha1,3- and alpha1,6-linked mannose arms in the core structure of N-glycan. Also acts on the GlcNAc-beta1,2-Man-alpha1-Ser/Thr moiety, forming a 2,6-branched structure in brain O-mannosyl glycan. Plays an active role in modulating integrin and laminin-dependent adhesion and migration of neuronal cells via its activity in the O-mannosyl glycan pathway. In Homo sapiens (Human), this protein is Alpha-1,6-mannosylglycoprotein 6-beta-N-acetylglucosaminyltransferase B (MGAT5B).